The sequence spans 308 residues: Pantothenate kinase (308 aa).

Position 90 to 97 (glycine 90 to serine 97) interacts with ATP.

Belongs to the prokaryotic pantothenate kinase family.

It is found in the cytoplasm. The catalysed reaction is (R)-pantothenate + ATP = (R)-4'-phosphopantothenate + ADP + H(+). The protein operates within cofactor biosynthesis; coenzyme A biosynthesis; CoA from (R)-pantothenate: step 1/5. In Sorangium cellulosum (strain So ce56) (Polyangium cellulosum (strain So ce56)), this protein is Pantothenate kinase.